The following is a 329-amino-acid chain: Phosphate acyltransferase (329 aa).

Belongs to the PlsX family. As to quaternary structure, homodimer. Probably interacts with PlsY.

It localises to the cytoplasm. The catalysed reaction is a fatty acyl-[ACP] + phosphate = an acyl phosphate + holo-[ACP]. Its pathway is lipid metabolism; phospholipid metabolism. Its function is as follows. Catalyzes the reversible formation of acyl-phosphate (acyl-PO(4)) from acyl-[acyl-carrier-protein] (acyl-ACP). This enzyme utilizes acyl-ACP as fatty acyl donor, but not acyl-CoA. This is Phosphate acyltransferase from Campylobacter concisus (strain 13826).